Here is a 192-residue protein sequence, read N- to C-terminus: Phosphoheptose isomerase (192 aa).

The 156-residue stretch at 37–192 folds into the SIS domain; sequence LADSFKAGGK…IQLIEKEMVK (156 aa). Residue 52-54 coordinates substrate; it reads NGG. H61 and E65 together coordinate Zn(2+). Substrate contacts are provided by residues E65, 93–94, 119–121, S124, and Q172; these read ND and STS. Residues Q172 and H180 each contribute to the Zn(2+) site.

Belongs to the SIS family. GmhA subfamily. As to quaternary structure, homotetramer. It depends on Zn(2+) as a cofactor.

The protein localises to the cytoplasm. It carries out the reaction 2 D-sedoheptulose 7-phosphate = D-glycero-alpha-D-manno-heptose 7-phosphate + D-glycero-beta-D-manno-heptose 7-phosphate. The protein operates within carbohydrate biosynthesis; D-glycero-D-manno-heptose 7-phosphate biosynthesis; D-glycero-alpha-D-manno-heptose 7-phosphate and D-glycero-beta-D-manno-heptose 7-phosphate from sedoheptulose 7-phosphate: step 1/1. In terms of biological role, catalyzes the isomerization of sedoheptulose 7-phosphate in D-glycero-D-manno-heptose 7-phosphate. This is Phosphoheptose isomerase from Salmonella agona (strain SL483).